Here is a 209-residue protein sequence, read N- to C-terminus: MGSVSNQQFAGGCAKAAEKAPEEAPPDAARAADEPQLLHGAGICKWFNVRMGFGFLSMTARAGVALDPPVDVFVHQSKLHMEGFRSLKEGEAVEFTFKKSAKGLESIRVTGPGGVFCIGSERRPKGKNMQKRRSKGDRCYNCGGLDHHAKECKLPPQPKKCHFCQSINHMVASCPLKAQQGPSSQGKPAYFREEEEEIHSPALLPEAQN.

Residues 1–31 are disordered; the sequence is MGSVSNQQFAGGCAKAAEKAPEEAPPDAARA. Residue Gly2 is modified to N-acetylglycine. At Ser3 the chain carries Phosphoserine. A CSD domain is found at 39–112; the sequence is HGAGICKWFN…GLESIRVTGP (74 aa). Residues 113–136 form a flexible linker region; it reads GGVFCIGSERRPKGKNMQKRRSKG. Ser120 bears the Phosphoserine mark. 2 CCHC-type zinc fingers span residues 137 to 154 and 159 to 176; these read DRCYNCGGLDHHAKECKL and KKCHFCQSINHMVASCPL. Positions 177-209 are disordered; the sequence is KAQQGPSSQGKPAYFREEEEEIHSPALLPEAQN. Ser200 is modified (phosphoserine).

It belongs to the lin-28 family. As to quaternary structure, monomer. During skeletal muscle differentiation, associated with translation initiation complexes in the polysomal compartment. Directly interacts with EIF3S2. Interacts with NCL in an RNA-dependent manner. Interacts with TUT4 in the presence of pre-let-7 RNA. As to expression, expressed in embryonic stem cells (ES cells), spermatagonia and testis. Expressed in numerous epithelial tissues including the epithelia of the small intestine, the intralobular duct epithelium of the mammary gland and the epithelia of Henle's loop in the kidney and in the collecting duct (at protein level). Also expressed in the myocardium and skeletal muscle (at protein level).

Its subcellular location is the cytoplasm. It localises to the rough endoplasmic reticulum. The protein localises to the P-body. The protein resides in the stress granule. It is found in the nucleus. Its subcellular location is the nucleolus. RNA-binding protein that inhibits processing of pre-let-7 miRNAs and regulates translation of mRNAs that control developmental timing, pluripotency and metabolism. Seems to recognize a common structural G-quartet (G4) feature in its miRNA and mRNA targets. 'Translational enhancer' that drives specific mRNAs to polysomes and increases the efficiency of protein synthesis. Its association with the translational machinery and target mRNAs results in an increased number of initiation events per molecule of mRNA and, indirectly, in mRNA stabilization. Binds IGF2 mRNA, MYOD1 mRNA, ARBP/36B4 ribosomal protein mRNA and its own mRNA. Essential for skeletal muscle differentiation program through the translational up-regulation of IGF2 expression. Suppressor of microRNA (miRNA) biogenesis, including that of let-7, miR107, miR-143 and miR-200c. Specifically binds the miRNA precursors (pre-miRNAs), recognizing an 5'-GGAG-3' motif found in pre-miRNA terminal loop, and recruits TUT4 and TUT7 uridylyltransferaseS. This results in the terminal uridylation of target pre-miRNAs. Uridylated pre-miRNAs fail to be processed by Dicer and undergo degradation. The repression of let-7 expression is required for normal development and contributes to maintain the pluripotent state by preventing let-7-mediated differentiation of embryonic stem cells. Localized to the periendoplasmic reticulum area, binds to a large number of spliced mRNAs and inhibits the translation of mRNAs destined for the ER, reducing the synthesis of transmembrane proteins, ER or Golgi lumen proteins, and secretory proteins. Binds to and enhances the translation of mRNAs for several metabolic enzymes, such as PFKP, PDHA1 or SDHA, increasing glycolysis and oxidative phosphorylation. Which, with the let-7 repression may enhance tissue repair in adult tissue. In Mus musculus (Mouse), this protein is Protein lin-28 homolog A (Lin28a).